A 244-amino-acid chain; its full sequence is 6-carboxyhexanoate--CoA ligase (244 aa).

Belongs to the BioW family. Homodimer. Mg(2+) serves as cofactor.

The catalysed reaction is heptanedioate + ATP + CoA = 6-carboxyhexanoyl-CoA + AMP + diphosphate. Its pathway is metabolic intermediate metabolism; pimeloyl-CoA biosynthesis; pimeloyl-CoA from pimelate: step 1/1. Functionally, catalyzes the transformation of pimelate into pimeloyl-CoA with concomitant hydrolysis of ATP to AMP. The sequence is that of 6-carboxyhexanoate--CoA ligase from Hydrogenobacter thermophilus (strain DSM 6534 / IAM 12695 / TK-6).